Reading from the N-terminus, the 242-residue chain is MPNFLSNKPIPVADRLIMALDLPDVSEAKTLVERLGDAVSFYKVGLELFMSGDCFALVDWLKAKDKKVFVDLKFFDVPETVGRAVKALSRRGVDFATVHGNDAIMEAAARNKGSLGILAVTVLTSLDQGDLRDLGFQCDVQELVLSRARRALAVGCDGVVSSGLEVPLLRGEIDHELMVVSPGIRPVENRPEDDQKRVVTVDQAFRNGADYIVVGRPIRDAADPREAAQRAQAQIRDVFAAG.

Residues aspartate 21, lysine 43, 71–80 (DLKFFDVPET), threonine 124, arginine 185, glutamine 195, glycine 215, and arginine 216 contribute to the substrate site. Lysine 73 (proton donor) is an active-site residue.

This sequence belongs to the OMP decarboxylase family. Type 1 subfamily. As to quaternary structure, homodimer.

The catalysed reaction is orotidine 5'-phosphate + H(+) = UMP + CO2. It participates in pyrimidine metabolism; UMP biosynthesis via de novo pathway; UMP from orotate: step 2/2. In terms of biological role, catalyzes the decarboxylation of orotidine 5'-monophosphate (OMP) to uridine 5'-monophosphate (UMP). This Methylococcus capsulatus (strain ATCC 33009 / NCIMB 11132 / Bath) protein is Orotidine 5'-phosphate decarboxylase.